The primary structure comprises 338 residues: Large ribosomal subunit protein uL3 (338 aa).

Positions 228–237 (HKHRKGHRRT) are enriched in basic residues. The segment at 228–255 (HKHRKGHRRTGTIGPQAPALMFTQPRPG) is disordered.

The protein belongs to the universal ribosomal protein uL3 family. As to quaternary structure, part of the 50S ribosomal subunit. Forms a cluster with proteins L14 and L24e.

Its function is as follows. One of the primary rRNA binding proteins, it binds directly near the 3'-end of the 23S rRNA, where it nucleates assembly of the 50S subunit. The polypeptide is Large ribosomal subunit protein uL3 (Pyrobaculum calidifontis (strain DSM 21063 / JCM 11548 / VA1)).